A 447-amino-acid polypeptide reads, in one-letter code: MGIETEFGVTCTFHGHRRLSPDEVARYLFRRVVSWGRSSNVFLRNGARLYLDVGSHPEYATAECDSLIQLVNHDRAGERVLEELLIDAEARLAEEGIGGDIYLFKNNTDSAGNSYGCHENFLVARAGEFSRISDVLLPFLVTRQLICGAGKVLQTPKAATFCLSQRAEHIWEGVSSATTRSRPIINTRDEPHADAEKYRRLHVIVGDSNMAETTTMLKVGSAALVLEMIEAGVSFRDFALDNPIRAIREVSHDVTGKKPVRLAGGRQASALDIQREYHAKAVEHLRNREPDPQVEQVVDLWGRTLDAVEAQDFAKVDTEIDWVIKRKLFQRYQDRHGFDLSDPKIAQLDLAYHDIKRGRGVFDVLQRKGLVKRVTEDETIDDAVENPPQTTRAKLRGDFITAAQAAGRDFTVDWVHLKLNDQAQRTVLCKDPFRSVDERVERLIASM.

Residue E4 participates in Mg(2+) binding. R48 is an ATP binding site. Y50 contributes to the Mg(2+) binding site. Residue D52 is the Proton acceptor of the active site. E58 contacts Mg(2+). The ATP site is built by T61 and W414.

It belongs to the Pup ligase/Pup deamidase family. Pup-conjugating enzyme subfamily.

The catalysed reaction is ATP + [prokaryotic ubiquitin-like protein]-L-glutamate + [protein]-L-lysine = ADP + phosphate + N(6)-([prokaryotic ubiquitin-like protein]-gamma-L-glutamyl)-[protein]-L-lysine.. It functions in the pathway protein degradation; proteasomal Pup-dependent pathway. It participates in protein modification; protein pupylation. In terms of biological role, catalyzes the covalent attachment of the prokaryotic ubiquitin-like protein modifier Pup to the proteasomal substrate proteins, thereby targeting them for proteasomal degradation. This tagging system is termed pupylation. The ligation reaction involves the side-chain carboxylate of the C-terminal glutamate of Pup and the side-chain amino group of a substrate lysine. The polypeptide is Pup--protein ligase 2 (Rhodococcus erythropolis (Arthrobacter picolinophilus)).